A 380-amino-acid chain; its full sequence is Protein FAM110B (380 aa).

The tract at residues alanine 92–aspartate 272 is disordered. Gly residues predominate over residues glycine 100 to serine 110. Residues isoleucine 127–serine 138 show a composition bias toward polar residues. Residues aspartate 153–phenylalanine 162 are compositionally biased toward basic and acidic residues. The segment covering lysine 239–serine 248 has biased composition (low complexity). Serine 248 and serine 311 each carry phosphoserine. The interval aspartate 327–arginine 347 is disordered. Residues serine 336–asparagine 345 show a composition bias toward basic and acidic residues.

The protein belongs to the FAM110 family.

It localises to the cytoplasm. Its subcellular location is the cytoskeleton. It is found in the microtubule organizing center. The protein localises to the centrosome. This chain is Protein FAM110B (FAM110B), found in Bos taurus (Bovine).